Consider the following 1168-residue polypeptide: Carboxylic acid reductase (1168 aa).

Residues His290, Ser385, 407-408, Thr412, Asp485, 497-500, Lys506, and Lys606 contribute to the AMP site; these read EG and YLDR. The region spanning 645-720 is the Carrier domain; it reads APVLPTLCRA…ALADHIEAAR (76 aa). Ser679 bears the O-(pantetheine 4'-phosphoryl)serine mark. NADP(+)-binding positions include 777–780, Arg804, Arg814, 844–845, 870–872, Ser910, Tyr946, and Lys950; these read TGFL, DK, and PAA.

It belongs to the ATP-dependent AMP-binding enzyme family. Carboxylic acid reductase subfamily. Requires pantetheine 4'-phosphate as cofactor.

The enzyme catalyses a carboxylate + ATP + NADPH + H(+) = an aldehyde + AMP + diphosphate + NADP(+). It carries out the reaction a medium-chain fatty acid + ATP + H(+) = a medium-chain fatty acyl-AMP + diphosphate. It catalyses the reaction a long-chain fatty acid + ATP + H(+) = a long-chain fatty acyl-AMP + diphosphate. The catalysed reaction is dodecanoate + ATP + H(+) = dodecanoyl-AMP + diphosphate. The enzyme catalyses hexadecanoate + ATP + H(+) = hexadecanoyl-AMP + diphosphate. Its function is as follows. Catalyzes the ATP- and NADPH-dependent reduction of carboxylic acids to the corresponding aldehydes. In vitro, also catalyzes the activation of medium/long-chain fatty acids as acyl-adenylates (acyl-AMP). This is Carboxylic acid reductase from Mycobacterium tuberculosis (strain ATCC 25618 / H37Rv).